The following is a 487-amino-acid chain: Aspartyl/glutamyl-tRNA(Asn/Gln) amidotransferase subunit B (487 aa).

It belongs to the GatB/GatE family. GatB subfamily. As to quaternary structure, heterotrimer of A, B and C subunits.

The catalysed reaction is L-glutamyl-tRNA(Gln) + L-glutamine + ATP + H2O = L-glutaminyl-tRNA(Gln) + L-glutamate + ADP + phosphate + H(+). It carries out the reaction L-aspartyl-tRNA(Asn) + L-glutamine + ATP + H2O = L-asparaginyl-tRNA(Asn) + L-glutamate + ADP + phosphate + 2 H(+). In terms of biological role, allows the formation of correctly charged Asn-tRNA(Asn) or Gln-tRNA(Gln) through the transamidation of misacylated Asp-tRNA(Asn) or Glu-tRNA(Gln) in organisms which lack either or both of asparaginyl-tRNA or glutaminyl-tRNA synthetases. The reaction takes place in the presence of glutamine and ATP through an activated phospho-Asp-tRNA(Asn) or phospho-Glu-tRNA(Gln). The sequence is that of Aspartyl/glutamyl-tRNA(Asn/Gln) amidotransferase subunit B from Roseiflexus sp. (strain RS-1).